The chain runs to 48 residues: uncharacterized protein (48 aa).

A helical transmembrane segment spans residues 18–38 (IIIKYWYIDLTITIFAFLILY).

Its subcellular location is the host membrane. This is an uncharacterized protein from Acidianus bottle-shaped virus (isolate Italy/Pozzuoli) (ABV).